We begin with the raw amino-acid sequence, 292 residues long: 33 kDa chaperonin (292 aa).

Intrachain disulfides connect Cys230–Cys232 and Cys263–Cys266.

It belongs to the HSP33 family. Post-translationally, under oxidizing conditions two disulfide bonds are formed involving the reactive cysteines. Under reducing conditions zinc is bound to the reactive cysteines and the protein is inactive.

It is found in the cytoplasm. Redox regulated molecular chaperone. Protects both thermally unfolding and oxidatively damaged proteins from irreversible aggregation. Plays an important role in the bacterial defense system toward oxidative stress. The protein is 33 kDa chaperonin of Enterobacter sp. (strain 638).